We begin with the raw amino-acid sequence, 1035 residues long: MAAETLNFGPEWLRALSGGGSVASPPPSPAMPKYKLADYRYGREEMLALYVKENKVPEELQDKEFAAVLQDEPLQPLALEPLTEEEQRNFSLSVNSVAVLRLMGKGAGPPLAGTSRGRGSTRSRGRGRGDSCFYQRSIEEGDGAFGRSPREIQRSQSWDDRGERRFEKSARRDGARCGFEEGGAGPRKEHARSDSENWRSLREEQEEEEEGSWRLGAGPRRDGDRWRSASPDGGPRSAGWREHGERRRKFEFDLRGDRGGCGEEEGRGGGGSSHLRRCRAPEGFEEDKDGLPEWCLDDEDEEMGTFDASGAFLPLKKGPKEPIPEEQELDFQGLEEEEEPSEGLEEEGPEAGGKELTPLPPQEEKSSSPSPLPTLGPLWGTNGDGDETAEKEPPAAEDDIRGIQLSPGVGSSAGPPGDLEDDEGLKHLQQEAEKLVASLQDSSLEEEQFTAAMQTQGLRHSAAATALPLSHGAARKWFYKDPQGEIQGPFTTQEMAEWFQAGYFSMSLLVKRGCDEGFQPLGEVIKMWGRVPFAPGPSPPPLLGNMDQERLKKQQELAAAALYQQLQHQQFLQLVSSRQLPQCALREKAALGDLTPPPPPPPQQQQQQLTAFLQQLQALKPPRGGDQNLLPTMSRSLSVPDSGRLWDVHTSASSQSGGEASLWDIPINSSTQGPILEQLQLQHKFQERREVELRAKREEEERKRREEKRRQQQQEEQKRRQEEEELFRRKHVRQQELLLKLLQQQQAVPVPPAPSSPPPLWAGLAKQGLSMKTLLELQLEGERQLHKQPPPREPARAQAPNHRVQLGGLGTAPLNQWVSEAGPLWGGPDKSGGGSSGLGLWEDTPKSGGSLVRGLGLKNSRSSPSLSDSYSHLSGRPIRKKTEEEEKLLKLLQGIPRPQDGFTQWCEQMLHTLSATGSLDVPMAVAILKEVESPYDVHDYIRSCLGDTLEAKEFAKQFLERRAKQKASQQRQQQQEAWLSSASLQTAFQANHSTKLGPGEGSKAKRRALMLHSDPSILGYSLHGSSGEIESVDDY.

Phosphoserine occurs at positions 24, 28, 137, and 157. The disordered stretch occupies residues 105-422; sequence KGAGPPLAGT…AGPPGDLEDD (318 aa). 2 stretches are compositionally biased toward basic and acidic residues: residues 148-179 and 186-203; these read SPRE…RCGF and PRKE…SLRE. Residue Ser-230 is modified to Phosphoserine. Basic and acidic residues predominate over residues 239 to 267; sequence GWREHGERRRKFEFDLRGDRGGCGEEEGR. 2 stretches are compositionally biased toward acidic residues: residues 295 to 304 and 324 to 349; these read CLDDEDEEMG and PEEQ…EEGP. A Phosphoserine modification is found at Ser-341. The segment covering 367 to 378 has biased composition (low complexity); the sequence is SSPSPLPTLGPL. A compositionally biased stretch (basic and acidic residues) spans 388-401; that stretch reads TAEKEPPAAEDDIR. The residue at position 406 (Ser-406) is a Phosphoserine. Residues 406 to 417 show a composition bias toward low complexity; sequence SPGVGSSAGPPG. The GYF domain occupies 474-522; the sequence is ARKWFYKDPQGEIQGPFTTQEMAEWFQAGYFSMSLLVKRGCDEGFQPLG. 2 positions are modified to phosphoserine: Ser-538 and Ser-638. Disordered stretches follow at residues 621-640, 696-724, and 825-879; these read PPRG…LSVP, KREE…QEEE, and WGGP…RPIR. Over residues 629-639 the composition is skewed to polar residues; the sequence is LLPTMSRSLSV. The segment covering 696-722 has biased composition (basic and acidic residues); the sequence is KREEEERKRREEKRRQQQQEEQKRRQE. A compositionally biased stretch (low complexity) spans 857-874; that stretch reads LKNSRSSPSLSDSYSHLS. Ser-862 carries the post-translational modification Phosphoserine.

The protein belongs to the GIGYF family. In terms of assembly, interacts with GRB10. This transient binding is increased under IGF1 stimulation and leads to recruitment of GIGYF1/GRB10 complex to IGF1 receptor. Interacts with DDX6.

May act cooperatively with GRB10 to regulate tyrosine kinase receptor signaling. May increase IGF1 receptor phosphorylation under IGF1 stimulation as well as phosphorylation of IRS1 and SHC1. The polypeptide is GRB10-interacting GYF protein 1 (GIGYF1) (Homo sapiens (Human)).